Reading from the N-terminus, the 247-residue chain is Ribonuclease 3 (247 aa).

Residues 21 to 149 (FKKLSKKIGI…LVGAIYLDRG (129 aa)) form the RNase III domain. Glutamate 62 provides a ligand contact to Mg(2+). The active site involves aspartate 66. Mg(2+)-binding residues include asparagine 135 and glutamate 138. Glutamate 138 is a catalytic residue. The 70-residue stretch at 176 to 245 (DYKTQLQEYS…AKELYIRIRR (70 aa)) folds into the DRBM domain.

Belongs to the ribonuclease III family. In terms of assembly, homodimer. It depends on Mg(2+) as a cofactor.

The protein resides in the cytoplasm. It carries out the reaction Endonucleolytic cleavage to 5'-phosphomonoester.. Functionally, digests double-stranded RNA. Involved in the processing of primary rRNA transcript to yield the immediate precursors to the large and small rRNAs (23S and 16S). Processes some mRNAs, and tRNAs when they are encoded in the rRNA operon. Processes pre-crRNA and tracrRNA of type II CRISPR loci if present in the organism. The polypeptide is Ribonuclease 3 (Leptospira borgpetersenii serovar Hardjo-bovis (strain L550)).